Consider the following 155-residue polypeptide: Small ribosomal subunit protein uS7 (155 aa).

Belongs to the universal ribosomal protein uS7 family. As to quaternary structure, part of the 30S ribosomal subunit. Contacts proteins S9 and S11.

Functionally, one of the primary rRNA binding proteins, it binds directly to 16S rRNA where it nucleates assembly of the head domain of the 30S subunit. Is located at the subunit interface close to the decoding center, probably blocks exit of the E-site tRNA. This is Small ribosomal subunit protein uS7 from Ureaplasma parvum serovar 3 (strain ATCC 27815 / 27 / NCTC 11736).